Here is a 229-residue protein sequence, read N- to C-terminus: MNDHVIYTQSDVGLNQFFAKIYSLVGMGVGLSAFVSYLMLYPFRENLISILVNQPMIYYGAAIIELILVFVASGAARKNTPAALPIFLIYAALNGFTLSFIIVAYAQTTVFQAFLSSAAVFFAMSIIGVKTKRDMSGLRKAMFAALIGVVVASLINLFIGSGMMSYVISVISVLIFSGLIASDNQMIKRVYQATNGQVGDGWAVAMALSLYLDFINLFISLLRIFGRND.

7 helical membrane passes run 21-41, 56-76, 83-103, 109-129, 141-161, 162-182, and 202-222; these read IYSL…LMLY, MIYY…SGAA, ALPI…FIIV, TVFQ…IIGV, AMFA…FIGS, GMMS…LIAS, and WAVA…ISLL.

The protein belongs to the BI1 family.

The protein localises to the cell membrane. This is an uncharacterized protein from Streptococcus pyogenes serotype M3 (strain ATCC BAA-595 / MGAS315).